The following is a 196-amino-acid chain: Large ribosomal subunit protein uL18 (196 aa).

The protein belongs to the universal ribosomal protein uL18 family. As to quaternary structure, part of the 50S ribosomal subunit. Contacts the 5S and 23S rRNAs.

This is one of the proteins that bind and probably mediate the attachment of the 5S RNA into the large ribosomal subunit, where it forms part of the central protuberance. This is Large ribosomal subunit protein uL18 from Saccharolobus islandicus (strain L.S.2.15 / Lassen #1) (Sulfolobus islandicus).